Here is a 93-residue protein sequence, read N- to C-terminus: uncharacterized protein (93 aa).

The next 2 membrane-spanning stretches (helical) occupy residues 7-27 (LIFLGIILMFIGFFMITLGMI) and 70-90 (ILSVLIAILMIIWMFLFAFGI).

It localises to the cell membrane. This is an uncharacterized protein from Methanocaldococcus jannaschii (strain ATCC 43067 / DSM 2661 / JAL-1 / JCM 10045 / NBRC 100440) (Methanococcus jannaschii).